The chain runs to 130 residues: MSMQDPIADMFTRIRNAQGANKVTVKMPSSKQKVAIAQVLKEEGFITGYSAESTVKPELEVELKYFEGKPVIETIERVSRPGLRIYKKRNELPNVMGGLGIAVVSTSKGLMTDRAARQAGLGGEIIGYVA.

It belongs to the universal ribosomal protein uS8 family. In terms of assembly, part of the 30S ribosomal subunit. Contacts proteins S5 and S12.

Its function is as follows. One of the primary rRNA binding proteins, it binds directly to 16S rRNA central domain where it helps coordinate assembly of the platform of the 30S subunit. The sequence is that of Small ribosomal subunit protein uS8 from Idiomarina loihiensis (strain ATCC BAA-735 / DSM 15497 / L2-TR).